A 175-amino-acid chain; its full sequence is ADDPVYDAEGNKLVNRGKYTIVSFSDGAGIDVVATGNENPEDPLSIVKSTRNIMYATSISSEDKTPPQPRNILENMRLKINFATDPHKGDVWSVVDFQPDGQQLKLAGRYPNQVKGAFTIQKGSNTPRTYKLLFCPVGSPCKNIGISTDPEGKKRLVVSYQSDPLVVKFHRHEPE.

A disulfide bridge connects residues C135 and C141.

This sequence belongs to the protease inhibitor I3 (leguminous Kunitz-type inhibitor) family.

In terms of biological role, 2S seed storage protein. This chain is Albumin-1, found in Psophocarpus tetragonolobus (Winged bean).